Reading from the N-terminus, the 278-residue chain is UPF0758 protein BURPS668_0979 (278 aa).

Residues 1-64 (MQYEIVSAGE…ATAAARRGRD (64 aa)) form a disordered region. The segment covering 22–59 (AAAPAAPSSAVPSSAALSSAALSSAARPTGAPPATAAA) has biased composition (low complexity). Residues 156–278 (LVDSPGAVDD…TFSFAQAGWI (123 aa)) form the MPN domain. 3 residues coordinate Zn(2+): histidine 227, histidine 229, and aspartate 240. The JAMM motif motif lies at 227–240 (HNHPSGAVRPSAAD).

The protein belongs to the UPF0758 family.

In Burkholderia pseudomallei (strain 668), this protein is UPF0758 protein BURPS668_0979.